The primary structure comprises 488 residues: Cobyric acid synthase (488 aa).

The 194-residue stretch at 248–441 (VLRVVVPALP…VHGLFDTPAA (194 aa)) folds into the GATase cobBQ-type domain. C328 serves as the catalytic Nucleophile. H433 is a catalytic residue.

Belongs to the CobB/CobQ family. CobQ subfamily.

It participates in cofactor biosynthesis; adenosylcobalamin biosynthesis. Catalyzes amidations at positions B, D, E, and G on adenosylcobyrinic A,C-diamide. NH(2) groups are provided by glutamine, and one molecule of ATP is hydrogenolyzed for each amidation. This chain is Cobyric acid synthase, found in Burkholderia vietnamiensis (strain G4 / LMG 22486) (Burkholderia cepacia (strain R1808)).